The primary structure comprises 555 residues: Serine/threonine-protein kinase Nek4 (555 aa).

The Protein kinase domain maps to 4–258 (YEVLEQIGKG…ANELLNHPHL (255 aa)). ATP-binding positions include 10-18 (IGKGSFGSA) and Lys-33. Asp-129 acts as the Proton acceptor in catalysis. Disordered stretches follow at residues 288-328 (LKER…MFNG), 346-372 (QRQE…KAST), and 443-477 (NRET…ITKD). Positions 304 to 320 (PSVSDTEAGSVSSSGKA) are enriched in polar residues.

It belongs to the protein kinase superfamily. NEK Ser/Thr protein kinase family. NIMA subfamily.

The enzyme catalyses L-seryl-[protein] + ATP = O-phospho-L-seryl-[protein] + ADP + H(+). The catalysed reaction is L-threonyl-[protein] + ATP = O-phospho-L-threonyl-[protein] + ADP + H(+). In terms of biological role, may be involved in plant development processes. This is Serine/threonine-protein kinase Nek4 (NEK4) from Arabidopsis thaliana (Mouse-ear cress).